The chain runs to 283 residues: Bis(5'-nucleosyl)-tetraphosphatase, symmetrical (283 aa).

This sequence belongs to the Ap4A hydrolase family.

It carries out the reaction P(1),P(4)-bis(5'-adenosyl) tetraphosphate + H2O = 2 ADP + 2 H(+). Hydrolyzes diadenosine 5',5'''-P1,P4-tetraphosphate to yield ADP. This Pseudomonas aeruginosa (strain LESB58) protein is Bis(5'-nucleosyl)-tetraphosphatase, symmetrical.